Consider the following 26-residue polypeptide: Mu-theraphotoxin-Phlo2a (26 aa).

Intrachain disulfides connect cysteine 2-cysteine 16, cysteine 9-cysteine 21, and cysteine 15-cysteine 25.

It belongs to the neurotoxin 30 (phrixotoxin) family. In terms of tissue distribution, expressed by the venom gland.

It is found in the secreted. Gating-modifier toxin that non-selectively inhibits voltage-gated sodium channel Nav by shifting the threshold for channel activation to more positive potentials. This toxin moderately inhibits human Nav1.2/SCN2A (IC(50)=404 nM), Nav1.5/SCN5A (IC(50)=218 nM) and Nav1.7/SCN9A (IC(50)=333 nM). Inhibition of Nav1.7 is voltage-dependent, with lower inhibition at more positive test pulses. The chain is Mu-theraphotoxin-Phlo2a from Phlogius sp. (Tarantula spider).